The sequence spans 344 residues: MPFLWGLRQDKEACVGTNNQSYICDTGHCCGQAQCCSHYYELWWFWLVWTIIIILSCCCVCHHRRAKHRLQAQQRQHEINLIAYREAHNYSALPFYFRFLPNYLLPPYEEVVNRPPTPPPPYSAFQLQQQQLLPPQGGPAGGSPPGADQPQGSQGAQSSPLSGPSRSSTRPPSVADPQSLEVPTERAATKALGMESSSSVASHGELDPGAFLDRDSECKEELLKDSSSEHGGAPPDSKDKTPGRHRRFTGDSGIEVCVCNRGHHDDDLKEFNTLIDDALDGPLDFCDSCHVRPPVDEEEGLCLSSEGQAREHGHPHLPRPPACLLLNTINEQDSPNSQRSSSPS.

Residues Leu-42–His-62 traverse the membrane as a helical segment. Disordered regions lie at residues Leu-132–Gly-250 and Cys-302–Pro-321. The span at Pro-145–Ser-173 shows a compositional bias: low complexity. Position 173 is a phosphoserine (Ser-173). Basic and acidic residues predominate over residues Leu-212–Ser-228.

It is found in the membrane. The protein is WW domain binding protein 1-like (Wbp1l) of Rattus norvegicus (Rat).